We begin with the raw amino-acid sequence, 260 residues long: Repetitive secreted protein 1 (260 aa).

An N-terminal signal peptide occupies residues 1-20 (MKLSFTIVATAALVASCTFA).

Post-translationally, rsp1 is processed by the subtilisin-like endoprotease kex2. Cleavage by kex2 generates 11 peptides.

It is found in the secreted. Its function is as follows. Repetitive secreted protein essential for pathogenic development. Hum3 and rsp1 together are pathogenicity proteins that share an essential function in early stages of the infection. The protein is Repetitive secreted protein 1 of Mycosarcoma maydis (Corn smut fungus).